A 632-amino-acid polypeptide reads, in one-letter code: Putative acetyl-CoA decarbonylase/synthase complex subunit alpha-like (632 aa).

[Ni-4Fe-4S] cluster is bound by residues H200, H226, C263, C379, C408, and C438.

Belongs to the Ni-containing carbon monoxide dehydrogenase family.

Its function is as follows. Part of the ACDS complex that catalyzes the reversible cleavage of acetyl-CoA, allowing autotrophic growth from CO(2). The alpha-epsilon subcomponent functions as a carbon monoxide dehydrogenase. The sequence is that of Putative acetyl-CoA decarbonylase/synthase complex subunit alpha-like (cdhA2) from Methanopyrus kandleri (strain AV19 / DSM 6324 / JCM 9639 / NBRC 100938).